A 217-amino-acid chain; its full sequence is MKVELTAIEARVIGCLIEKEVTTPDQYPLSLNALTNACNQKSNREPVMSLSEADVLYAVDALIERRLVSDESGFNSRVSKYQHRFCNTEFGDLKLTKQEKGIVCCMLLRGAQTPGEIRTRTNRLATFNDVKEVENVLEHLANDEKGPLVVKLPREAGKRESRYMHLFCGEVDVSELAVATTAPSSAGSERITQLEQEVAELREELAALKEQVESLFS.

It belongs to the UPF0502 family.

This is UPF0502 protein VIBHAR_05349 from Vibrio campbellii (strain ATCC BAA-1116).